A 330-amino-acid chain; its full sequence is Probable transposase for insertion sequence element ISH11 (330 aa).

The protein belongs to the transposase 11 family.

In terms of biological role, involved in the transposition of the insertion sequence ISH11. In Halobacterium salinarum (strain ATCC 29341 / DSM 671 / R1), this protein is Probable transposase for insertion sequence element ISH11.